Here is a 347-residue protein sequence, read N- to C-terminus: Spermidine/putrescine import ATP-binding protein PotA (347 aa).

One can recognise an ABC transporter domain in the interval 6–236; that stretch reads IELRDISKHY…PKNSFVAKFI (231 aa). ATP is bound at residue 38–45; it reads GPSGCGKT.

It belongs to the ABC transporter superfamily. Spermidine/putrescine importer (TC 3.A.1.11.1) family. The complex is composed of two ATP-binding proteins (PotA), two transmembrane proteins (PotB and PotC) and a solute-binding protein (PotD).

It localises to the cell membrane. The catalysed reaction is ATP + H2O + polyamine-[polyamine-binding protein]Side 1 = ADP + phosphate + polyamineSide 2 + [polyamine-binding protein]Side 1.. Functionally, part of the ABC transporter complex PotABCD involved in spermidine/putrescine import. Responsible for energy coupling to the transport system. The sequence is that of Spermidine/putrescine import ATP-binding protein PotA from Clostridioides difficile (strain 630) (Peptoclostridium difficile).